The primary structure comprises 371 residues: D-alanine--D-alanine ligase (371 aa).

The region spanning 154 to 361 (KKLLVAEGLP…YPTLLAAMVD (208 aa)) is the ATP-grasp domain. 182-237 (RERLGLPVFVKPARGGSSIGVSRVSDWAELPAAIEAARRHDPKVIVEAGIAGRELE) is a binding site for ATP. Residues Asp316, Glu328, and Asn330 each contribute to the Mg(2+) site.

It belongs to the D-alanine--D-alanine ligase family. The cofactor is Mg(2+). Mn(2+) is required as a cofactor.

Its subcellular location is the cytoplasm. The enzyme catalyses 2 D-alanine + ATP = D-alanyl-D-alanine + ADP + phosphate + H(+). The protein operates within cell wall biogenesis; peptidoglycan biosynthesis. In terms of biological role, cell wall formation. This is D-alanine--D-alanine ligase from Mycobacterium sp. (strain JLS).